The sequence spans 340 residues: uncharacterized protein (340 aa).

The region spanning 58 to 307 is the Radical SAM core domain; it reads AALPFRYTVN…PSYREMLRER (250 aa). Positions 72, 76, and 79 each coordinate [4Fe-4S] cluster. The next 2 helical transmembrane spans lie at 140 to 160 and 243 to 263; these read YALM…LSIL and QLLG…GLHL.

[4Fe-4S] cluster serves as cofactor.

It localises to the cell membrane. This is an uncharacterized protein from Mycobacterium tuberculosis (strain CDC 1551 / Oshkosh).